We begin with the raw amino-acid sequence, 954 residues long: Glycine dehydrogenase (decarboxylating) (954 aa).

Lysine 704 carries the N6-(pyridoxal phosphate)lysine modification.

The protein belongs to the GcvP family. As to quaternary structure, the glycine cleavage system is composed of four proteins: P, T, L and H. Pyridoxal 5'-phosphate is required as a cofactor.

It carries out the reaction N(6)-[(R)-lipoyl]-L-lysyl-[glycine-cleavage complex H protein] + glycine + H(+) = N(6)-[(R)-S(8)-aminomethyldihydrolipoyl]-L-lysyl-[glycine-cleavage complex H protein] + CO2. The glycine cleavage system catalyzes the degradation of glycine. The P protein binds the alpha-amino group of glycine through its pyridoxal phosphate cofactor; CO(2) is released and the remaining methylamine moiety is then transferred to the lipoamide cofactor of the H protein. The polypeptide is Glycine dehydrogenase (decarboxylating) (Rhizobium johnstonii (strain DSM 114642 / LMG 32736 / 3841) (Rhizobium leguminosarum bv. viciae)).